An 862-amino-acid chain; its full sequence is DNA topoisomerase 3-beta-1 (862 aa).

The Toprim domain maps to 3 to 153 (TVLMVAEKPS…EKTVFRARFS (151 aa)). Residues 171 to 593 (DHNEALSVDA…HTLDIFKRKF (423 aa)) enclose the Topo IA-type catalytic domain. Residue Tyr336 is the O-(5'-phospho-DNA)-tyrosine intermediate of the active site. Residues 820-855 (HPMHRGGPGRRQGRGRGRGRRPPGKPNPRRPKDKMS) form a disordered region. The segment covering 821–851 (PMHRGGPGRRQGRGRGRGRRPPGKPNPRRPK) has biased composition (basic residues).

Belongs to the type IA topoisomerase family. As to expression, highly expressed in testis.

The enzyme catalyses ATP-independent breakage of single-stranded DNA, followed by passage and rejoining.. Its function is as follows. Releases the supercoiling and torsional tension of DNA introduced during the DNA replication and transcription by transiently cleaving and rejoining one strand of the DNA duplex. Introduces a single-strand break via transesterification at a target site in duplex DNA. The scissile phosphodiester is attacked by the catalytic tyrosine of the enzyme, resulting in the formation of a DNA-(5'-phosphotyrosyl)-enzyme intermediate and the expulsion of a 3'-OH DNA strand. The free DNA strand than undergoes passage around the unbroken strand thus removing DNA supercoils. Finally, in the religation step, the DNA 3'-OH attacks the covalent intermediate to expel the active-site tyrosine and restore the DNA phosphodiester backbone. Possesses negatively supercoiled DNA relaxing activity. The polypeptide is DNA topoisomerase 3-beta-1 (Top3b) (Mus musculus (Mouse)).